We begin with the raw amino-acid sequence, 111 residues long: Ciprofloxacin tolerance protein (111 aa).

Topologically, residues 1–5 (MVTAN) are periplasmic. Residues 6–26 (FAAIAGLSLIAVALVAVFFSP) form a helical membrane-spanning segment. Residues 27-30 (YRRW) lie on the Cytoplasmic side of the membrane. Residues 31–51 (LGFMLAGMFFWGLLEVVRFGV) traverse the membrane as a helical segment. Topologically, residues 52–58 (QVTFEMP) are periplasmic. Residues 59–79 (VTYSYLTALSLAMVMVTFVLL) traverse the membrane as a helical segment. The Cytoplasmic segment spans residues 80–111 (REDKQAQKALANRQYIEHTPVYEDDQQQCSSR).

The protein resides in the cell inner membrane. May play a role in cellular filamentation, especially in response to ciprofloxacin. Increased expression confers tolerance to the antibiotic ciprofloxacin. This is Ciprofloxacin tolerance protein from Acinetobacter baumannii.